The sequence spans 93 residues: Integration host factor subunit beta (93 aa).

Residues arginine 59–aspartate 93 form a disordered region. The span at proline 82 to aspartate 93 shows a compositional bias: basic and acidic residues.

This sequence belongs to the bacterial histone-like protein family. In terms of assembly, heterodimer of an alpha and a beta chain.

This protein is one of the two subunits of integration host factor, a specific DNA-binding protein that functions in genetic recombination as well as in transcriptional and translational control. The chain is Integration host factor subunit beta from Stutzerimonas stutzeri (strain A1501) (Pseudomonas stutzeri).